We begin with the raw amino-acid sequence, 491 residues long: Putative ABC transporter ATP-binding protein TDE_0906 (491 aa).

ABC transporter domains follow at residues 2 to 241 and 267 to 491; these read INLN…KQGL and LTLH…KERL. Residues 36 to 43 and 300 to 307 each bind ATP; these read GKSGCGKT and GKNGCGKT.

It belongs to the ABC transporter superfamily.

The protein resides in the cell inner membrane. In terms of biological role, probably part of an ABC transporter complex. Responsible for energy coupling to the transport system. This chain is Putative ABC transporter ATP-binding protein TDE_0906, found in Treponema denticola (strain ATCC 35405 / DSM 14222 / CIP 103919 / JCM 8153 / KCTC 15104).